A 209-amino-acid chain; its full sequence is Uracil phosphoribosyltransferase (209 aa).

5-phospho-alpha-D-ribose 1-diphosphate is bound by residues R79, R104, and 131–139 (DPMLATGNS). Uracil-binding positions include I194 and 199-201 (GDA). Position 200 (D200) interacts with 5-phospho-alpha-D-ribose 1-diphosphate.

It belongs to the UPRTase family. Mg(2+) is required as a cofactor.

It catalyses the reaction UMP + diphosphate = 5-phospho-alpha-D-ribose 1-diphosphate + uracil. It functions in the pathway pyrimidine metabolism; UMP biosynthesis via salvage pathway; UMP from uracil: step 1/1. With respect to regulation, allosterically activated by GTP. Functionally, catalyzes the conversion of uracil and 5-phospho-alpha-D-ribose 1-diphosphate (PRPP) to UMP and diphosphate. The chain is Uracil phosphoribosyltransferase from Acidovorax ebreus (strain TPSY) (Diaphorobacter sp. (strain TPSY)).